The sequence spans 620 residues: Zinc finger protein GLIS1 (620 aa).

The segment at 108 to 132 (PLTGDLGGPSKRARPGPASTDSHEG) is disordered. The C2H2-type 1 zinc-finger motif lies at 195 to 220 (QACRWVDCCAAYEQQEELVRHIEKSH). A C2H2-type 2; atypical zinc finger spans residues 229-256 (FTCFWAGCVRRYKPFNARYKLLIHMRVH). 3 C2H2-type zinc fingers span residues 262-286 (NKCM…LRSH), 292-316 (YLCQ…QRTH), and 322-346 (YACQ…VKAH). The Bipartite nuclear localization signal signature appears at 340–356 (RKHVKAHSAKEQQVRKK). The disordered stretch occupies residues 414-515 (ASGLLPPAHD…PPLPSPQGYQ (102 aa)). The span at 477-488 (SSQSHSPGGQPF) shows a compositional bias: low complexity. Residues 489–510 (PTLPSKPSYPPFQSPPPPPLPS) are compositionally biased toward pro residues.

The protein belongs to the GLI C2H2-type zinc-finger protein family. As to quaternary structure, interacts with KLF4. Interacts with POU5F1 and/or POU5F1B. Interacts with SOX2.

The protein localises to the nucleus. Acts both as a repressor and an activator of transcription. Binds to the consensus sequence 5'-GACCACCCAC-3'. By controlling the expression of genes involved in cell differentiation inhibits the lineage commitment of multipotent cells. Prevents, for instance, the differentiation of multipotent mesenchymal cells into adipocyte and osteoblast. This Homo sapiens (Human) protein is Zinc finger protein GLIS1.